The following is a 527-amino-acid chain: GMP synthase [glutamine-hydrolyzing] (527 aa).

The Glutamine amidotransferase type-1 domain occupies 19 to 212 (KIIVLDYGSQ…AFSICGAKGD (194 aa)). Residue Cys96 is the Nucleophile of the active site. Active-site residues include His186 and Glu188. The region spanning 213–402 (WSMANFVDMQ…LGMPDEVVWR (190 aa)) is the GMPS ATP-PPase domain. 240-246 (SGGVDSS) contacts ATP.

As to quaternary structure, homodimer.

The enzyme catalyses XMP + L-glutamine + ATP + H2O = GMP + L-glutamate + AMP + diphosphate + 2 H(+). Its pathway is purine metabolism; GMP biosynthesis; GMP from XMP (L-Gln route): step 1/1. Catalyzes the synthesis of GMP from XMP. In Streptococcus thermophilus (strain CNRZ 1066), this protein is GMP synthase [glutamine-hydrolyzing].